Reading from the N-terminus, the 484-residue chain is Gasdermin-D (484 aa).

Residue Tyr-37 is modified to Phosphotyrosine. At Cys-56 the chain carries S-(2-succinyl)cysteine. The next 2 beta stranded transmembrane spans lie at 91–97 (QGSVELA) and 103–108 (KIAGGA). Phosphotyrosine is present on Tyr-158. Beta stranded transmembrane passes span 180-186 (GSGRFSL) and 191-197 (CLQGEGQ). Ser-185 bears the Phosphoserine mark. An S-(2-succinyl)cysteine mark is found at Cys-191 and Cys-268. Cys-191 is lipidated: S-palmitoyl cysteine. The segment at 277 to 296 (VPAEGAFTEDFQGLRAEVET) is linker helix loop. Cys-309 carries the S-(2-succinyl)cysteine modification. An O-linked (GlcNAc) serine glycan is attached at Ser-338. Cys-467 bears the S-(2-succinyl)cysteine mark.

This sequence belongs to the gasdermin family. As to quaternary structure, homooligomer; homooligomeric ring-shaped pore complex containing 27-28 subunits when inserted in the membrane. Homooligomerization is promoted by the mTORC1 complex in macrophages. In response to a canonical inflammasome stimulus, such as nigericin, recruited to NLRP3 inflammasone with similar kinetics to that of uncleaved CASP1 precursor. Although this recruitment is also observed in the absence of PYCARD, it is more efficient in its presence. Post-translationally, cleavage at Asp-275 by CASP1 (mature and uncleaved precursor forms), CASP4, CASP5 or CASP8 relieves autoinhibition and is sufficient to initiate pyroptosis. Cleavage by CASP1 and CASP4 is not strictly dependent on the consensus cleavage site on GSDMD but depends on an exosite interface on CASP1 that recognizes and binds the Gasdermin-D, C-terminal (GSDMD-CT) part. Cleavage by CASP8 takes place following inactivation of MAP3K7/TAK1 by Yersinia toxin YopJ. Cleavage at Asp-87 by CASP3 or CASP7 inactivates the ability to mediate pyroptosis, but generates the Gasdermin-D, p13 chain, which translocates to the nucleus and acts as a transcription regulator. Cleavage by papain allergen generates the Gasdermin-D, p40 chain. Palmitoylated at Cys-191 by ZDHHC5 and ZDHHC9 in response to microbial infection and danger signals. Palmitoylation takes place before cleavage by caspases (CASP1, CASP4, CASP5 or CASP8) and is required for membrane translocation and pore formation. Depalmitoylated by LYPLA2. In terms of processing, succination of Cys-191 by the Krebs cycle intermediate fumarate, which leads to S-(2-succinyl)cysteine residues, inhibits processing by caspases, and ability to initiate pyroptosis. Succination modification is catalyzed by a non-enzymatic reaction caused by an accumulation of fumarate. Post-translationally, glycosylated: O-GlcNAcylation by OGT leads to reduced cleavage by CASP4 and decreased LPS-induced endothelial cell pyroptosis. (Microbial infection) Cleaved and inactivated by Protease 3C from Human enterovirus 71 (EV71), preventing GSDMD-mediated pyroptosis. In terms of processing, (Microbial infection) Cleaved and inactivated by the 3C-like proteinase nsp5 from human coronavirus SARS-CoV-2, preventing GSDMD-mediated pyroptosis. Post-translationally, (Microbial infection) Ubiquitinated by S.flexneri IpaH7.8, leading to its degradation by the proteasome. In terms of tissue distribution, expressed in the suprabasal cells of esophagus, as well as in the isthmus/neck, pit, and gland of the stomach, suggesting preferential expression in differentiating cells.

Its subcellular location is the cytoplasm. It localises to the cytosol. The protein localises to the inflammasome. The protein resides in the cell membrane. It is found in the secreted. Its subcellular location is the mitochondrion membrane. It localises to the nucleus. Its activity is regulated as follows. The full-length protein before cleavage is inactive: intramolecular interactions between N- and C-terminal domains mediate autoinhibition in the absence of activation signal. The intrinsic pyroptosis-inducing activity is carried by the released N-terminal moiety (Gasdermin-D, N-terminal) following cleavage by caspases CASP1, CASP4, CASP5 or CASP8. Cleavage at Asp-87 by CASP3 or CASP7 inactivates the ability to mediate pyroptosis. Homooligomerization and pore formation is specifically inhibited by VHH(GSDMD-1) and, to a lesser extent, VHH(GSDMD-2) nanobodies, protecting against excessive pyroptosis. Inhibited by small molecule NU6300, which covalently reacts with Cys-191, thereby preventing palmitoylation and pyroptosis. In terms of biological role, precursor of a pore-forming protein that plays a key role in host defense against pathogen infection and danger signals. This form constitutes the precursor of the pore-forming protein: upon cleavage, the released N-terminal moiety (Gasdermin-D, N-terminal) binds to membranes and forms pores, triggering pyroptosis. Functionally, promotes pyroptosis in response to microbial infection and danger signals. Produced by the cleavage of gasdermin-D by inflammatory caspases CASP1, CASP4 or CASP5 in response to canonical, as well as non-canonical (such as cytosolic LPS) inflammasome activators. After cleavage, moves to the plasma membrane where it strongly binds to inner leaflet lipids, including monophosphorylated phosphatidylinositols, such as phosphatidylinositol 4-phosphate, bisphosphorylated phosphatidylinositols, such as phosphatidylinositol (4,5)-bisphosphate, as well as phosphatidylinositol (3,4,5)-bisphosphate, and more weakly to phosphatidic acid and phosphatidylserine. Homooligomerizes within the membrane and forms pores of 10-15 nanometers (nm) of inner diameter, allowing the release of mature interleukin-1 (IL1B and IL18) and triggering pyroptosis. Gasdermin pores also allow the release of mature caspase-7 (CASP7). In some, but not all, cells types, pyroptosis is followed by pyroptotic cell death, which is caused by downstream activation of ninjurin-1 (NINJ1), which mediates membrane rupture (cytolysis). Also forms pores in the mitochondrial membrane, resulting in release of mitochondrial DNA (mtDNA) into the cytosol. Gasdermin-D, N-terminal released from pyroptotic cells into the extracellular milieu rapidly binds to and kills both Gram-negative and Gram-positive bacteria, without harming neighboring mammalian cells, as it does not disrupt the plasma membrane from the outside due to lipid-binding specificity. Under cell culture conditions, also active against intracellular bacteria, such as Listeria monocytogenes. Also active in response to MAP3K7/TAK1 inactivation by Yersinia toxin YopJ, which triggers cleavage by CASP8 and subsequent activation. Required for mucosal tissue defense against enteric pathogens. Activation of the non-canonical inflammasome in brain endothelial cells can lead to excessive pyroptosis, leading to blood-brain barrier breakdown. Strongly binds to bacterial and mitochondrial lipids, including cardiolipin. Does not bind to unphosphorylated phosphatidylinositol, phosphatidylethanolamine nor phosphatidylcholine. Transcription coactivator produced by the cleavage by CASP3 or CASP7 in the upper small intestine in response to dietary antigens. Required to maintain food tolerance in small intestine: translocates to the nucleus and acts as a coactivator for STAT1 to induce the transcription of CIITA and MHC class II molecules, which in turn induce type 1 regulatory T (Tr1) cells in upper small intestine. Its function is as follows. Produced by the cleavage by papain allergen. After cleavage, moves to the plasma membrane and homooligomerizes within the membrane and forms pores of 10-15 nanometers (nm) of inner diameter, allowing the specific release of mature interleukin-33 (IL33), promoting type 2 inflammatory immune response. This Homo sapiens (Human) protein is Gasdermin-D.